The primary structure comprises 620 residues: Glutathione-regulated potassium-efflux system protein KefC (620 aa).

Helical transmembrane passes span 4 to 24, 26 to 46, 54 to 74, 90 to 110, 114 to 134, 149 to 169, 178 to 198, 218 to 238, 270 to 290, 294 to 314, 327 to 347, and 359 to 379; these read HTLL…PIAV, LGLG…PWGL, SILH…GLEL, GALQ…FLGL, VAEL…MQAM, FAVL…IPLL, LGAF…VVLL, VFSA…EEVG, GLLL…GTLV, LRIL…LWLV, WFAV…GAAQ, and ALTL…VLLT. In terms of domain architecture, RCK N-terminal spans 399–518; that stretch reads QPRVIVAGFG…AGVAMPERET (120 aa). A disordered region spans residues 599–620; the sequence is QGTAEGKHSGEVADEPEVKPSI.

This sequence belongs to the monovalent cation:proton antiporter 2 (CPA2) transporter (TC 2.A.37) family. KefC subfamily. Homodimer. Interacts with the regulatory subunit KefF.

It is found in the cell inner membrane. Pore-forming subunit of a potassium efflux system that confers protection against electrophiles. Catalyzes K(+)/H(+) antiport. The sequence is that of Glutathione-regulated potassium-efflux system protein KefC from Salmonella agona (strain SL483).